The chain runs to 124 residues: MKMKKYTKTHEWVSIEDKVATVGITNHAQEQLGDVVYVDLPEVGREVKKGEVVASIESVKAAADVYAPLSGKIVEVNEKLDTEPELINKDPEGEGWLFKMEISDEGELEDLLDEQAYQEFCAQE.

The Lipoyl-binding domain maps to 19 to 101; the sequence is VATVGITNHA…EGEGWLFKME (83 aa). The residue at position 60 (K60) is an N6-lipoyllysine.

It belongs to the GcvH family. In terms of assembly, the glycine cleavage system is composed of four proteins: P, T, L and H. Requires (R)-lipoate as cofactor.

The glycine cleavage system catalyzes the degradation of glycine. The H protein shuttles the methylamine group of glycine from the P protein to the T protein. This is Glycine cleavage system H protein from Thermotoga maritima (strain ATCC 43589 / DSM 3109 / JCM 10099 / NBRC 100826 / MSB8).